The following is a 297-amino-acid chain: Ectoine dioxygenase (297 aa).

L-ectoine is bound at residue glutamine 131. Position 137 (lysine 137) interacts with 2-oxoglutarate. Fe cation-binding residues include histidine 148, aspartate 150, and histidine 249.

The protein belongs to the PhyH family. EctD subfamily. Homodimer. The cofactor is Fe(2+).

The catalysed reaction is L-ectoine + 2-oxoglutarate + O2 = 5-hydroxyectoine + succinate + CO2. Involved in the biosynthesis of 5-hydroxyectoine, called compatible solute, which helps organisms to survive extreme osmotic stress by acting as a highly soluble organic osmolyte. Catalyzes the 2-oxoglutarate-dependent selective hydroxylation of L-ectoine to yield (4S,5S)-5-hydroxyectoine. The chain is Ectoine dioxygenase from Streptomyces anulatus (Streptomyces chrysomallus).